The chain runs to 1444 residues: DNA polymerase III PolC-type (1444 aa).

The segment at 196–218 is disordered; sequence EAVQVMQKRQAEGQNGNSSAAPL. The segment covering 207–216 has biased composition (polar residues); sequence EGQNGNSSAA. In terms of domain architecture, Exonuclease spans 428 to 584; the sequence is YCVFDVETTG…FDAEATAYLA (157 aa).

It belongs to the DNA polymerase type-C family. PolC subfamily.

The protein localises to the cytoplasm. The enzyme catalyses DNA(n) + a 2'-deoxyribonucleoside 5'-triphosphate = DNA(n+1) + diphosphate. Required for replicative DNA synthesis. This DNA polymerase also exhibits 3' to 5' exonuclease activity. This Listeria welshimeri serovar 6b (strain ATCC 35897 / DSM 20650 / CCUG 15529 / CIP 8149 / NCTC 11857 / SLCC 5334 / V8) protein is DNA polymerase III PolC-type.